The sequence spans 245 residues: MGGQKTHFGFSTVNEDEKAGKVAEVFHSVAKNYDIMNDVMSAGLHRVWKHFTINTAHLKKGDKVLDIAGGTGDLSRGWAKRVGKEGEVWLTDINSSMLTVGRDRLLNEGMILPVSLADAEKLPFPDNYFNLVSVAFGLRNMTHKDAALKEMYRVLKPGGTLLVLEFSKIYKPLEGAYDFYSFKLLPVMGRLIAKDAESYQYLAESIRMHPDQETLKQMMLDAGFDSVDYHNMSAGIVALHKGVKF.

S-adenosyl-L-methionine-binding positions include Thr71, Asp92, and 118–119 (DA).

Belongs to the class I-like SAM-binding methyltransferase superfamily. MenG/UbiE family.

The catalysed reaction is a 2-demethylmenaquinol + S-adenosyl-L-methionine = a menaquinol + S-adenosyl-L-homocysteine + H(+). It catalyses the reaction a 2-methoxy-6-(all-trans-polyprenyl)benzene-1,4-diol + S-adenosyl-L-methionine = a 5-methoxy-2-methyl-3-(all-trans-polyprenyl)benzene-1,4-diol + S-adenosyl-L-homocysteine + H(+). Its pathway is quinol/quinone metabolism; menaquinone biosynthesis; menaquinol from 1,4-dihydroxy-2-naphthoate: step 2/2. It participates in cofactor biosynthesis; ubiquinone biosynthesis. In terms of biological role, methyltransferase required for the conversion of demethylmenaquinol (DMKH2) to menaquinol (MKH2) and the conversion of 2-polyprenyl-6-methoxy-1,4-benzoquinol (DDMQH2) to 2-polyprenyl-3-methyl-6-methoxy-1,4-benzoquinol (DMQH2). This chain is Ubiquinone/menaquinone biosynthesis C-methyltransferase UbiE, found in Neisseria meningitidis serogroup B (strain ATCC BAA-335 / MC58).